A 229-amino-acid polypeptide reads, in one-letter code: Putative N-acetylmannosamine-6-phosphate 2-epimerase (229 aa).

The protein belongs to the NanE family.

It catalyses the reaction an N-acyl-D-glucosamine 6-phosphate = an N-acyl-D-mannosamine 6-phosphate. It participates in amino-sugar metabolism; N-acetylneuraminate degradation; D-fructose 6-phosphate from N-acetylneuraminate: step 3/5. In terms of biological role, converts N-acetylmannosamine-6-phosphate (ManNAc-6-P) to N-acetylglucosamine-6-phosphate (GlcNAc-6-P). This chain is Putative N-acetylmannosamine-6-phosphate 2-epimerase, found in Actinobacillus pleuropneumoniae serotype 3 (strain JL03).